A 502-amino-acid polypeptide reads, in one-letter code: Glycerol kinase (502 aa).

Threonine 14 lines the ADP pocket. The ATP site is built by threonine 14, threonine 15, and serine 16. Threonine 14 provides a ligand contact to sn-glycerol 3-phosphate. ADP is bound at residue arginine 18. Sn-glycerol 3-phosphate-binding residues include arginine 84, glutamate 85, and tyrosine 136. Residues arginine 84, glutamate 85, and tyrosine 136 each coordinate glycerol. Residue histidine 232 is modified to Phosphohistidine; by HPr. Aspartate 246 lines the sn-glycerol 3-phosphate pocket. Glycerol is bound by residues aspartate 246 and glutamine 247. ADP-binding residues include threonine 268 and glycine 311. Threonine 268, glycine 311, glutamine 315, and glycine 412 together coordinate ATP. ADP contacts are provided by glycine 412 and asparagine 416.

It belongs to the FGGY kinase family. Homotetramer and homodimer (in equilibrium). In terms of processing, the phosphoenolpyruvate-dependent sugar phosphotransferase system (PTS), including enzyme I, and histidine-containing protein (HPr) are required for the phosphorylation, which leads to the activation of the enzyme.

The enzyme catalyses glycerol + ATP = sn-glycerol 3-phosphate + ADP + H(+). Its pathway is polyol metabolism; glycerol degradation via glycerol kinase pathway; sn-glycerol 3-phosphate from glycerol: step 1/1. With respect to regulation, activated by phosphorylation and inhibited by fructose 1,6-bisphosphate (FBP). Key enzyme in the regulation of glycerol uptake and metabolism. Catalyzes the phosphorylation of glycerol to yield sn-glycerol 3-phosphate. In Streptococcus pneumoniae serotype 2 (strain D39 / NCTC 7466), this protein is Glycerol kinase.